The chain runs to 73 residues: Disintegrin cerastin (73 aa).

In terms of domain architecture, Disintegrin spans 1 to 73 (EAGEECDCGT…ADCPRNGLYG (73 aa)). Intrachain disulfides connect cysteine 6-cysteine 21, cysteine 8-cysteine 16, cysteine 15-cysteine 38, cysteine 29-cysteine 35, cysteine 34-cysteine 59, and cysteine 47-cysteine 66. The short motif at 51 to 53 (RGD) is the Cell attachment site element.

It belongs to the venom metalloproteinase (M12B) family. P-II subfamily. P-IIa sub-subfamily. In terms of assembly, monomer (disintegrin). Expressed by the venom gland.

It localises to the secreted. Inhibits fibrinogen interaction with platelets. Acts by binding to alpha-IIb/beta-3 (ITGA2B/ITGB3) on the platelet surface and inhibits aggregation induced by ADP, thrombin, platelet-activating factor and collagen. This is Disintegrin cerastin from Crotalus cerastes cerastes (Mojave desert sidewinder).